We begin with the raw amino-acid sequence, 79 residues long: Large ribosomal subunit protein bL31 (79 aa).

The Zn(2+) site is built by Cys16, Cys18, Cys37, and Cys40.

Belongs to the bacterial ribosomal protein bL31 family. Type A subfamily. As to quaternary structure, part of the 50S ribosomal subunit. Requires Zn(2+) as cofactor.

Functionally, binds the 23S rRNA. This Coxiella burnetii (strain CbuG_Q212) (Coxiella burnetii (strain Q212)) protein is Large ribosomal subunit protein bL31.